The primary structure comprises 340 residues: MALRLLRRAARGAAAAALLRLKASLAADIPRLGYSSSSHHKYIPRRAVLYVPGNDEKKIKKIPSLNVDCAVLDCEDGVAANKKNEARLRIVKTLEDIDLGPTEKCVRVNSVSSGLAEEDLETLLQSRVLPSSLMLPKVESPEEIQWFADKFSFHLKGRKLEQPMNLIPFVETAMGLLNFKAVCEETLKVGPQVGLFLDAVVFGGEDFRASIGATSSKETLDILYARQKIVVIAKAFGLQAIDLVYIDFRDGAGLLRQSREGAAMGFTGKQVIHPNQIAVVQEQFSPSPEKIKWAEELIAAFKEHQQLGKGAFTFQGSMIDMPLLKQAQNTVTLATSIKEK.

A mitochondrion-targeting transit peptide spans Met-1–Lys-22. Substrate contacts are provided by Tyr-50, Lys-57, and Lys-61. 2 positions are modified to N6-acetyllysine: Lys-57 and Lys-61. Residues Lys-82 and Lys-92 each carry the N6-acetyllysine; alternate modification. Residues Lys-82 and Lys-92 each carry the N6-succinyllysine; alternate modification. Residue Arg-107 coordinates substrate. The Mg(2+) site is built by Glu-171 and Asp-206. Ile-272–His-273 contributes to the substrate binding site. Lys-309 is subject to N6-succinyllysine. The active site involves Asp-320.

It belongs to the HpcH/HpaI aldolase family. Citrate lyase beta subunit-like subfamily. As to quaternary structure, homotrimer. The cofactor is Mg(2+).

The protein resides in the mitochondrion. The enzyme catalyses glyoxylate + acetyl-CoA + H2O = (S)-malate + CoA + H(+). It catalyses the reaction propanoyl-CoA + glyoxylate + H2O = 3-methylmalate + CoA + H(+). It carries out the reaction (3S)-citramalyl-CoA = pyruvate + acetyl-CoA. The catalysed reaction is (S)-malyl-CoA + H2O = (S)-malate + CoA + H(+). In terms of biological role, mitochondrial citramalyl-CoA lyase indirectly involved in the vitamin B12 metabolism. Converts citramalyl-CoA into acetyl-CoA and pyruvate in the C5-dicarboxylate catabolism pathway. The C5-dicarboxylate catabolism pathway is required to detoxify itaconate, a vitamin B12-poisoning metabolite. Also acts as a malate synthase in vitro, converting glyoxylate and acetyl-CoA to malate. Also displays malyl-CoA thioesterase activity. Also acts as a beta-methylmalate synthase in vitro, by mediating conversion of glyoxylate and propionyl-CoA to beta-methylmalate. Also has very weak citramalate synthase activity in vitro. In Homo sapiens (Human), this protein is Citramalyl-CoA lyase, mitochondrial.